A 132-amino-acid polypeptide reads, in one-letter code: MVRRFLVTLRIRRACGPPRVRVFVVHIPRLTGEWAAPGAPAAVALVLMLLRSQRLGQQPLPRRPGHDDGQRPSGGAAAAPRRGAQLRRPRHSHPTRARRCPGGLPGHAGGAAPGRGAAGRARCLGPSARGPG.

Residues 1–64 form an interaction with CDK5RAP3 and MDM2 region; the sequence is MVRRFLVTLR…LGQQPLPRRP (64 aa). The disordered stretch occupies residues 56 to 132; it reads GQQPLPRRPG…CLGPSARGPG (77 aa). Low complexity predominate over residues 71–83; it reads RPSGGAAAAPRRG. Over residues 84–99 the composition is skewed to basic residues; that stretch reads AQLRRPRHSHPTRARR. Residues 103–117 show a composition bias toward gly residues; the sequence is GLPGHAGGAAPGRGA.

Does not interact with cyclins, CDK1, CDK2, CDK4, CDK5 or CDK6. Binds to BCL6, E2F1, HUWE1, MDM2, MYC, NPM1/B23, TOP1/TOPOI and UBE2I/UBC9. Interacts with TBRG1 and COMMD1. Interacts with CDKN2AIP and E4F1. Interacts with CDK5RAP3 and MDM2; form a ternary complex involved in regulation of p53/TP53. Interacts with NOP53; the interaction is direct and promotes ARF nucleoplasmic relocalization and ubiquitin-mediated proteasomal degradation. Interacts with TTF1 (via the N-terminal region (NRD) and a C-terminal region); the interaction is direct and inhibits the nucleolar localization of TTF1. As to quaternary structure, interacts with C1QBP. Ubiquitinated in normal cells by TRIP12 via the ubiquitin fusion degradation (UFD) pathway, a process that mediates ubiquitination at the N-terminus, regardless of the absence of lysine residues. Ubiquitination leads to its proteasomal degradation. In cancer cells, however, TRIP12 is located in a different cell compartment, preventing ubiquitination and degradation.

The protein localises to the nucleus. The protein resides in the nucleolus. Its subcellular location is the nucleoplasm. It localises to the mitochondrion. Functionally, capable of inducing cell cycle arrest in G1 and G2 phases. Acts as a tumor suppressor. Binds to MDM2 and blocks its nucleocytoplasmic shuttling by sequestering it in the nucleolus. This inhibits the oncogenic action of MDM2 by blocking MDM2-induced degradation of p53 and enhancing p53-dependent transactivation and apoptosis. Also induces G2 arrest and apoptosis in a p53-independent manner by preventing the activation of cyclin B1/CDC2 complexes. Binds to BCL6 and down-regulates BCL6-induced transcriptional repression. Binds to E2F1 and MYC and blocks their transcriptional activator activity but has no effect on MYC transcriptional repression. Binds to TOP1/TOPOI and stimulates its activity. This complex binds to rRNA gene promoters and may play a role in rRNA transcription and/or maturation. Interacts with NPM1/B23 and promotes its polyubiquitination and degradation, thus inhibiting rRNA processing. Plays a role in inhibiting ribosome biogenesis, perhaps by binding to the nucleolar localization sequence of transcription termination factor TTF1, and thereby preventing nucleolar localization of TTF1. Interacts with COMMD1 and promotes its 'Lys63'-linked polyubiquitination. Interacts with UBE2I/UBC9 and enhances sumoylation of a number of its binding partners including MDM2 and E2F1. Binds to HUWE1 and represses its ubiquitin ligase activity. May play a role in controlling cell proliferation and apoptosis during mammary gland development. Its function is as follows. May be involved in regulation of autophagy and caspase-independent cell death; the short-lived mitochondrial isoform is stabilized by C1QBP. This chain is Tumor suppressor ARF, found in Homo sapiens (Human).